The sequence spans 405 residues: Dematin (405 aa).

Disordered regions lie at residues 1-30, 79-158, 173-192, and 203-332; these read MERL…PSSI, PRSR…GSPQ, FPAA…TDYW, and TEWR…DRGN. The span at 11–29 shows a compositional bias: low complexity; the sequence is SPGSVSPSRDSSVPGSPSS. Residues Ser16, Ser18, Ser26, Ser92, Ser96, Ser105, Ser110, Ser113, and Ser156 each carry the phosphoserine modification. Positions 108-123 are enriched in polar residues; that stretch reads IISQASAPRTTGTPRT. The segment covering 216 to 227 has biased composition (acidic residues); sequence EEEEEEEDDDSG. The tract at residues 224-308 is interaction with RASGRF2; it reads DDSGEEMKAL…SRLQSTEFSP (85 aa). Residue Ser226 is modified to Phosphoserine. 2 stretches are compositionally biased toward basic and acidic residues: residues 228–242 and 252–261; these read EEMK…EELS and ILKEEMEKSL. Phosphoserine is present on residues Ser269, Ser279, Ser289, Ser303, Ser315, Ser333, Ser372, and Ser383. Polar residues predominate over residues 276–322; sequence FHTSLHQGTSKSSSLPAYGRTTLSRLQSTEFSPSGSETGSPGLQNGE. Positions 337–405 constitute an HP domain; the sequence is VLEQKIYPYE…NELKKKASLF (69 aa). At Ser403 the chain carries Phosphoserine; by PKA.

Belongs to the villin/gelsolin family. As to quaternary structure, monomeric (isoform 2); under reducing conditions. Self-associates. Exists under oxidizing condition as a trimer of two isoforms 2 and isoform 1 linked by disulfide bonds. Found in a complex with DMTN, F-actin and spectrin. Found in a complex with ADD2, DMTN and SLC2A1. Interacts with F-actin, ITPKB, RASGRF2 and spectrin. Isoform 2 interacts with SLC2A1 (via C-terminus cytoplasmic region). Isoform 1 and isoform 2 interact (phosphorylated form) with plasmodium berghei 14-3-3 protein; the interaction occurs in a PKA-dependent manner. Post-translationally, phosphorylated. Phosphorylation at Ser-403 by PKA causes the C-terminal headpiece domain to associate with the N-terminal core domain, and leads to the inhibition of its actin bundling activity. In terms of processing, the N-terminus is blocked. In terms of tissue distribution, expressed in platelets (at protein level). Expressed in heart, brain, lung, skeletal muscle, and kidney.

Its subcellular location is the cytoplasm. The protein resides in the cytosol. The protein localises to the perinuclear region. It is found in the cytoskeleton. It localises to the cell membrane. Its subcellular location is the membrane. The protein resides in the endomembrane system. The protein localises to the cell projection. Functionally, membrane-cytoskeleton-associated protein with F-actin-binding activity that induces F-actin bundles formation and stabilization. Its F-actin-bundling activity is reversibly regulated upon its phosphorylation by the cAMP-dependent protein kinase A (PKA). Binds to the erythrocyte membrane glucose transporter-1 SLC2A1/GLUT1, and hence stabilizes and attaches the spectrin-actin network to the erythrocytic plasma membrane. Plays a role in maintaining the functional integrity of PKA-activated erythrocyte shape and the membrane mechanical properties. Also plays a role as a modulator of actin dynamics in fibroblasts; acts as a negative regulator of the RhoA activation pathway. In platelets, functions as a regulator of internal calcium mobilization across the dense tubular system that affects platelet granule secretion pathways and aggregation. Also required for the formation of a diverse set of cell protrusions, such as filopodia and lamellipodia, necessary for platelet cell spreading, motility and migration. Acts as a tumor suppressor and inhibits malignant cell transformation. This Homo sapiens (Human) protein is Dematin (DMTN).